A 494-amino-acid chain; its full sequence is MFQVQKELASHEAVVVALFEEEKTSSFVQELDKAFEGQLQVLLEEKELSTKKKAISKVHSLGKTDVKRYYFVGLGKKESYTTETLRSALGKTFKTLQAAKVQDAAILLDSFVTEKLDAIDVAHIAAEVQGLGTYELQTYKSDKKDRVELEKFTAITAEDAQEIEAALTVGYVHGRATNSARTLVNMPPNVLTATKLAEYAVELAEKYDMDYKVLEKEEMEELGMGALLAVNQGSIEPPKMIALIYKGKEEWTDVIGFVGKGITYDTGGYSLKPREGMVGMKGDMGGAAAVLGAMEIIGELRPEQNVIAVIPSTDNVVSGTAFKPDDVITSMSGKTIEVLNTDAEGRLALADGITYAKKLGANYLIDVATLTGGVIVALGNHTTGAMTNNEELFEQVLEASMETDESIWQLPIFDRDKERVRNSKFADLNNSPGREGHAVMAGTFIGEFAEDTPWVHLDIAGTSESSGAHDLGPAGATGAMVRTLATLVERFGEE.

Residues lysine 260 and aspartate 265 each contribute to the Mn(2+) site. Residue lysine 272 is part of the active site. Mn(2+) contacts are provided by aspartate 283, aspartate 342, and glutamate 344. The active site involves arginine 346.

Belongs to the peptidase M17 family. Mn(2+) is required as a cofactor.

It is found in the cytoplasm. The catalysed reaction is Release of an N-terminal amino acid, Xaa-|-Yaa-, in which Xaa is preferably Leu, but may be other amino acids including Pro although not Arg or Lys, and Yaa may be Pro. Amino acid amides and methyl esters are also readily hydrolyzed, but rates on arylamides are exceedingly low.. It carries out the reaction Release of an N-terminal amino acid, preferentially leucine, but not glutamic or aspartic acids.. Functionally, presumably involved in the processing and regular turnover of intracellular proteins. Catalyzes the removal of unsubstituted N-terminal amino acids from various peptides. The chain is Probable cytosol aminopeptidase from Bacillus thuringiensis subsp. konkukian (strain 97-27).